The following is a 291-amino-acid chain: Succinate--CoA ligase [ADP-forming] subunit alpha 1 (291 aa).

CoA-binding positions include 20 to 23 (TGFQ), lysine 46, and 99 to 101 (VTE). Residue tyrosine 162 participates in substrate binding. Catalysis depends on histidine 249, which acts as the Tele-phosphohistidine intermediate.

It belongs to the succinate/malate CoA ligase alpha subunit family. In terms of assembly, heterotetramer of two alpha and two beta subunits.

The enzyme catalyses succinate + ATP + CoA = succinyl-CoA + ADP + phosphate. The catalysed reaction is GTP + succinate + CoA = succinyl-CoA + GDP + phosphate. It participates in carbohydrate metabolism; tricarboxylic acid cycle; succinate from succinyl-CoA (ligase route): step 1/1. In terms of biological role, succinyl-CoA synthetase functions in the citric acid cycle (TCA), coupling the hydrolysis of succinyl-CoA to the synthesis of either ATP or GTP and thus represents the only step of substrate-level phosphorylation in the TCA. The alpha subunit of the enzyme binds the substrates coenzyme A and phosphate, while succinate binding and nucleotide specificity is provided by the beta subunit. The protein is Succinate--CoA ligase [ADP-forming] subunit alpha 1 of Archaeoglobus fulgidus (strain ATCC 49558 / DSM 4304 / JCM 9628 / NBRC 100126 / VC-16).